The chain runs to 469 residues: MTVKTRFAPSPTGFLHVGGARTALYSWLYARANQGEFVLRIEDTDLERSTPEACAAILEGMEWLNLNWDEGPYYQTKRFDRYNEIIVQMLEQGTAYKCYCSRERIDTMREEQAAKGEQQKYDGCCRDKAPRDTDEPFVVRFKNPTEGSVVFDDHVRGHIEFANSTLDDLIIARTEGTPTYNFCVVVDDWDMGITCVVRGEDHINNTPRQINILKALGAPVPEYAHVSMILGDDGAKLSKRHGAVGVMQYRDDGYLPEALLNYLVRLGWSHGDQEVFSIDEMKQFFSLDDINKAASAFNTDKLIWLNQHYIKELDPEYVASHLEWHMADQNIDTSNGPKLSEVVSALSERAKTLKELAASSRYFFEDFAEFDETAAKKHLRGVALEPLTLFQSKLAGLNEWTLEAIHQAIEDTAAELEVGMGKVGMPLRVAVTGAGMSPAVDLTIFLVGKVRAEQRISKAIEFVANRINS.

The 'HIGH' region signature appears at 9–19 (PSPTGFLHVGG). 4 residues coordinate Zn(2+): C98, C100, C125, and D127. The 'KMSKS' region motif lies at 236–240 (KLSKR). K239 is a binding site for ATP.

This sequence belongs to the class-I aminoacyl-tRNA synthetase family. Glutamate--tRNA ligase type 1 subfamily. In terms of assembly, monomer. Zn(2+) is required as a cofactor.

Its subcellular location is the cytoplasm. The enzyme catalyses tRNA(Glu) + L-glutamate + ATP = L-glutamyl-tRNA(Glu) + AMP + diphosphate. Catalyzes the attachment of glutamate to tRNA(Glu) in a two-step reaction: glutamate is first activated by ATP to form Glu-AMP and then transferred to the acceptor end of tRNA(Glu). This is Glutamate--tRNA ligase from Shewanella woodyi (strain ATCC 51908 / MS32).